Here is a 489-residue protein sequence, read N- to C-terminus: Rhamnulokinase (489 aa).

Position 13-17 (13-17) interacts with ATP; that stretch reads ASSGR. A disulfide bridge links Cys-68 with Cys-222. Residues Gly-83 and 236 to 238 each bind substrate; that span reads HDT. The active-site Proton acceptor is Asp-237. Thr-259 is an ATP binding site. Asn-296 is a substrate binding site. Gln-304 is an ATP binding site. A disulfide bridge connects residues Cys-353 and Cys-370. Gly-402 serves as a coordination point for ATP. Cysteines 413 and 417 form a disulfide.

This sequence belongs to the rhamnulokinase family. In terms of assembly, monomer. Requires Mg(2+) as cofactor.

It catalyses the reaction L-rhamnulose + ATP = L-rhamnulose 1-phosphate + ADP + H(+). The protein operates within carbohydrate degradation; L-rhamnose degradation; glycerone phosphate from L-rhamnose: step 2/3. Its function is as follows. Involved in the catabolism of L-rhamnose (6-deoxy-L-mannose). Catalyzes the transfer of the gamma-phosphate group from ATP to the 1-hydroxyl group of L-rhamnulose to yield L-rhamnulose 1-phosphate. This Escherichia coli (strain SE11) protein is Rhamnulokinase.